A 517-amino-acid chain; its full sequence is Ribonuclease Y (517 aa).

Residues 1-21 traverse the membrane as a helical segment; it reads MIEVLIGLGAGVAGVGAGYLY. In terms of domain architecture, KH spans 207-273; it reads LINVVNIKND…TRVIELLVED (67 aa). Positions 333-426 constitute an HD domain; the sequence is ALAHSLEVAH…VCAADCLSAA (94 aa).

Belongs to the RNase Y family.

The protein resides in the cell membrane. In terms of biological role, endoribonuclease that initiates mRNA decay. The chain is Ribonuclease Y from Campylobacter curvus (strain 525.92).